Reading from the N-terminus, the 122-residue chain is Small ribosomal subunit protein uS13 (122 aa).

A disordered region spans residues 94 to 122 (GLPVRGQSTQKNARTRKGPRKTVAGKKGK). A compositionally biased stretch (basic residues) spans 106 to 122 (ARTRKGPRKTVAGKKGK).

Belongs to the universal ribosomal protein uS13 family. As to quaternary structure, part of the 30S ribosomal subunit. Forms a loose heterodimer with protein S19. Forms two bridges to the 50S subunit in the 70S ribosome.

Its function is as follows. Located at the top of the head of the 30S subunit, it contacts several helices of the 16S rRNA. In the 70S ribosome it contacts the 23S rRNA (bridge B1a) and protein L5 of the 50S subunit (bridge B1b), connecting the 2 subunits; these bridges are implicated in subunit movement. Contacts the tRNAs in the A and P-sites. This Mycoplasmopsis synoviae (strain 53) (Mycoplasma synoviae) protein is Small ribosomal subunit protein uS13.